The following is a 747-amino-acid chain: Protein O-mannosyl-transferase 1 (747 aa).

7 helical membrane passes run 30–50, 90–110, 121–141, 176–196, 205–225, 228–248, and 267–287; these read PLVV…LGLL, FGHM…NFLW, VPVW…VPMA, LLES…LKFF, SVHW…AVGI, MGIF…WHLI, and VALL…HLML. MIR domains follow at residues 318 to 381, 392 to 449, and 453 to 513; these read PLEV…VKDP, PRPV…LDIV, and SNQD…VEEH. Residues N435, N471, and N539 are each glycosylated (N-linked (GlcNAc...) asparagine). The next 3 helical transmembrane spans lie at 597–617, 636–656, and 660–680; these read IVIW…FFWY, WVLA…PFFL, and MLFL…LPIV.

It belongs to the glycosyltransferase 39 family.

The protein resides in the endoplasmic reticulum membrane. It catalyses the reaction a di-trans,poly-cis-dolichyl beta-D-mannosyl phosphate + L-seryl-[protein] = 3-O-(alpha-D-mannosyl)-L-seryl-[protein] + a di-trans,poly-cis-dolichyl phosphate + H(+). The enzyme catalyses a di-trans,poly-cis-dolichyl beta-D-mannosyl phosphate + L-threonyl-[protein] = 3-O-(alpha-D-mannosyl)-L-threonyl-[protein] + a di-trans,poly-cis-dolichyl phosphate + H(+). It participates in protein modification; protein glycosylation. Transfers mannosyl residues to the hydroxyl group of serine or threonine residues. Coexpression of both POMT1 and POMT2 is necessary for enzyme activity, expression of either POMT1 or POMT2 alone is insufficient. Essentially dedicated to O-mannosylation of alpha-DAG1 and few other proteins but not of cadherins and protocaherins. The sequence is that of Protein O-mannosyl-transferase 1 (Pomt1) from Rattus norvegicus (Rat).